Here is a 457-residue protein sequence, read N- to C-terminus: Multidrug resistance protein MdtK (457 aa).

A run of 12 helical transmembrane segments spans residues 11 to 31 (LLAL…MGFV), 53 to 73 (IWLP…PVIA), 93 to 113 (WLAG…GYII), 127 to 147 (AVGY…FQVA), 160 to 180 (GMVM…IFIY), 188 to 208 (LGGI…FIAM), 243 to 263 (LPIA…ALLV), 276 to 296 (IALN…AAVT), 314 to 334 (AART…IFTV), 350 to 370 (VVAL…SDSI), 387 to 407 (IFFI…YILA), and 418 to 438 (PAGF…LMML).

Belongs to the multi antimicrobial extrusion (MATE) (TC 2.A.66.1) family. MdtK subfamily.

The protein resides in the cell inner membrane. Its function is as follows. Multidrug efflux pump that functions probably as a Na(+)/drug antiporter. The chain is Multidrug resistance protein MdtK from Salmonella heidelberg (strain SL476).